We begin with the raw amino-acid sequence, 345 residues long: Probable branched-chain amino acid transport permease protein LivM (345 aa).

Transmembrane regions (helical) follow at residues 3–23 (IDLI…SLSL), 42–62 (LVGA…YFGI), 91–111 (ILIL…AIFI), 124–144 (ITLL…LNII), 163–183 (YRGW…YLFF), 222–242 (IGSA…VNII), 269–289 (GVAL…IYKY), and 297–317 (IPFE…LLIL).

This sequence belongs to the binding-protein-dependent transport system permease family. LivHM subfamily.

Its subcellular location is the cell membrane. Part of the binding-protein-dependent transport system for branched-chain amino acids. Probably responsible for the translocation of the substrates across the membrane. This is Probable branched-chain amino acid transport permease protein LivM (livM) from Methanocaldococcus jannaschii (strain ATCC 43067 / DSM 2661 / JAL-1 / JCM 10045 / NBRC 100440) (Methanococcus jannaschii).